Consider the following 630-residue polypeptide: Transferrin-binding protein B (630 aa).

Residues 1–17 (MKSVPLITGGLSFLLSA) form the signal peptide. A lipid anchor (N-palmitoyl cysteine) is attached at C18. C18 carries S-diacylglycerol cysteine lipidation. Disordered stretches follow at residues 26–53 (DVDDVSNPSSSKPRYQDDTSSSRTKSNL), 280–301 (VTPTKSTSDEHPFTSEGTLEGG), and 591–613 (NNPTATNSESSSTVPSPPNSPNA). Over residues 32–50 (NPSSSKPRYQDDTSSSRTK) the composition is skewed to polar residues.

Belongs to the TbpB family.

It is found in the cell outer membrane. It localises to the cell surface. In terms of biological role, haemophilus acquires iron by extracting it from serum transferrin (TF) in its human host. Acts as a transferrin receptor and is required for transferrin utilization. The polypeptide is Transferrin-binding protein B (Haemophilus influenzae (strain 86-028NP)).